We begin with the raw amino-acid sequence, 371 residues long: tRNA (guanine(26)-N(2))-dimethyltransferase (371 aa).

Positions Met1–Val370 constitute a Trm1 methyltransferase domain. Positions 36, 66, 81, 107, and 108 each coordinate S-adenosyl-L-methionine. Residues Cys238, Cys241, Cys258, and Cys261 each contribute to the Zn(2+) site.

The protein belongs to the class I-like SAM-binding methyltransferase superfamily. Trm1 family.

The enzyme catalyses guanosine(26) in tRNA + 2 S-adenosyl-L-methionine = N(2)-dimethylguanosine(26) in tRNA + 2 S-adenosyl-L-homocysteine + 2 H(+). In terms of biological role, dimethylates a single guanine residue at position 26 of a number of tRNAs using S-adenosyl-L-methionine as donor of the methyl groups. The polypeptide is tRNA (guanine(26)-N(2))-dimethyltransferase (Halobacterium salinarum (strain ATCC 700922 / JCM 11081 / NRC-1) (Halobacterium halobium)).